The sequence spans 269 residues: 4-hydroxy-tetrahydrodipicolinate reductase (269 aa).

Residues 11–16 (GASGRM) and Glu-37 each bind NAD(+). Position 38 (Arg-38) interacts with NADP(+). NAD(+) is bound by residues 101–103 (GTT) and 125–128 (AGNM). The active-site Proton donor/acceptor is His-158. His-159 contributes to the (S)-2,3,4,5-tetrahydrodipicolinate binding site. The active-site Proton donor is Lys-162. 168–169 (GT) contacts (S)-2,3,4,5-tetrahydrodipicolinate.

It belongs to the DapB family.

It localises to the cytoplasm. The enzyme catalyses (S)-2,3,4,5-tetrahydrodipicolinate + NAD(+) + H2O = (2S,4S)-4-hydroxy-2,3,4,5-tetrahydrodipicolinate + NADH + H(+). It catalyses the reaction (S)-2,3,4,5-tetrahydrodipicolinate + NADP(+) + H2O = (2S,4S)-4-hydroxy-2,3,4,5-tetrahydrodipicolinate + NADPH + H(+). The protein operates within amino-acid biosynthesis; L-lysine biosynthesis via DAP pathway; (S)-tetrahydrodipicolinate from L-aspartate: step 4/4. In terms of biological role, catalyzes the conversion of 4-hydroxy-tetrahydrodipicolinate (HTPA) to tetrahydrodipicolinate. The polypeptide is 4-hydroxy-tetrahydrodipicolinate reductase (Ruegeria sp. (strain TM1040) (Silicibacter sp.)).